The chain runs to 277 residues: Phosphatidylglycerol--prolipoprotein diacylglyceryl transferase (277 aa).

4 helical membrane passes run 11 to 31, 55 to 75, 93 to 113, and 117 to 137; these read IIFSIGSFKAHWYGFMYLISF, LLYIIFISSCIGGRIGYIIFY, GGMSFHGGLIGAIIAMYYLSL, and VKILKISDFIVPLVPFGLGAG. R138 serves as a coordination point for a 1,2-diacyl-sn-glycero-3-phospho-(1'-sn-glycerol). 3 consecutive transmembrane segments (helical) span residues 192–212, 220–240, and 256–276; these read PSQLYEFFLEGIFLFFIIYFF, GSISALFLISYGILRIISEFF, and MGQILSIPMIIIGVLYVNLFI.

This sequence belongs to the Lgt family.

Its subcellular location is the cell inner membrane. The enzyme catalyses L-cysteinyl-[prolipoprotein] + a 1,2-diacyl-sn-glycero-3-phospho-(1'-sn-glycerol) = an S-1,2-diacyl-sn-glyceryl-L-cysteinyl-[prolipoprotein] + sn-glycerol 1-phosphate + H(+). It participates in protein modification; lipoprotein biosynthesis (diacylglyceryl transfer). Functionally, catalyzes the transfer of the diacylglyceryl group from phosphatidylglycerol to the sulfhydryl group of the N-terminal cysteine of a prolipoprotein, the first step in the formation of mature lipoproteins. In Buchnera aphidicola subsp. Schizaphis graminum (strain Sg), this protein is Phosphatidylglycerol--prolipoprotein diacylglyceryl transferase.